We begin with the raw amino-acid sequence, 262 residues long: Glutamate racemase (262 aa).

Residues 5–6 and 37–38 contribute to the substrate site; these read DS and YG. Cys69 (proton donor/acceptor) is an active-site residue. A substrate-binding site is contributed by 70–71; that stretch reads NT. Cys181 (proton donor/acceptor) is an active-site residue. 182 to 183 is a binding site for substrate; it reads TH.

Belongs to the aspartate/glutamate racemases family.

It carries out the reaction L-glutamate = D-glutamate. It participates in cell wall biogenesis; peptidoglycan biosynthesis. Its function is as follows. Provides the (R)-glutamate required for cell wall biosynthesis. This is Glutamate racemase from Buchnera aphidicola subsp. Acyrthosiphon pisum (strain APS) (Acyrthosiphon pisum symbiotic bacterium).